A 251-amino-acid polypeptide reads, in one-letter code: Imidazole glycerol phosphate synthase subunit HisF (251 aa).

Residues Asp-11 and Asp-130 contribute to the active site.

It belongs to the HisA/HisF family. In terms of assembly, heterodimer of HisH and HisF.

It is found in the cytoplasm. It catalyses the reaction 5-[(5-phospho-1-deoxy-D-ribulos-1-ylimino)methylamino]-1-(5-phospho-beta-D-ribosyl)imidazole-4-carboxamide + L-glutamine = D-erythro-1-(imidazol-4-yl)glycerol 3-phosphate + 5-amino-1-(5-phospho-beta-D-ribosyl)imidazole-4-carboxamide + L-glutamate + H(+). It participates in amino-acid biosynthesis; L-histidine biosynthesis; L-histidine from 5-phospho-alpha-D-ribose 1-diphosphate: step 5/9. IGPS catalyzes the conversion of PRFAR and glutamine to IGP, AICAR and glutamate. The HisF subunit catalyzes the cyclization activity that produces IGP and AICAR from PRFAR using the ammonia provided by the HisH subunit. In Listeria monocytogenes serotype 4b (strain CLIP80459), this protein is Imidazole glycerol phosphate synthase subunit HisF.